The following is a 198-amino-acid chain: MKQPSALSALVEALRALPGVGPKSAQRMAYHLMQHDREGAERLGRSLLFATEHLRHCDKCNTFTEAQICEVCSDEERDPTLLCVVETPADQIMLEQTMTYRGLYFVLMGRLSPLDGIGPKEIHFDRLVRRASDGIVKEVVLATNFTNEGEATAHYLGQTLKARGLAVTRLARGVPVGGELEYVDAGTIARAMLDRRTM.

The C4-type zinc finger occupies 57–72 (CDKCNTFTEAQICEVC). Positions 80 to 175 (TLLCVVETPA…AVTRLARGVP (96 aa)) constitute a Toprim domain.

It belongs to the RecR family.

May play a role in DNA repair. It seems to be involved in an RecBC-independent recombinational process of DNA repair. It may act with RecF and RecO. This is Recombination protein RecR from Burkholderia multivorans (strain ATCC 17616 / 249).